A 434-amino-acid polypeptide reads, in one-letter code: Homogentisate 1,2-dioxygenase (434 aa).

Residue histidine 289 is the Proton acceptor of the active site. Fe cation contacts are provided by histidine 332 and glutamate 338. Residues tyrosine 347 and histidine 368 each contribute to the homogentisate site. Residue histidine 368 coordinates Fe cation.

It belongs to the homogentisate dioxygenase family. In terms of assembly, hexamer; dimer of trimers. The cofactor is Fe cation.

It carries out the reaction homogentisate + O2 = 4-maleylacetoacetate + H(+). It functions in the pathway amino-acid degradation; L-phenylalanine degradation; acetoacetate and fumarate from L-phenylalanine: step 4/6. Its function is as follows. Involved in the catabolism of homogentisate (2,5-dihydroxyphenylacetate or 2,5-OH-PhAc), a central intermediate in the degradation of phenylalanine and tyrosine. Catalyzes the oxidative ring cleavage of the aromatic ring of homogentisate to yield maleylacetoacetate. This Pseudomonas fluorescens (strain ATCC BAA-477 / NRRL B-23932 / Pf-5) protein is Homogentisate 1,2-dioxygenase.